The primary structure comprises 258 residues: Arylamine N-acetyltransferase 1 (258 aa).

Cys59 acts as the Acyl-thioester intermediate in catalysis. 97–98 contributes to the substrate binding site; that stretch reads IH. Residues His98 and Asp113 contribute to the active site. CoA contacts are provided by Tyr199 and Thr205.

Belongs to the arylamine N-acetyltransferase family.

The protein localises to the cytoplasm. It carries out the reaction an arylamine + acetyl-CoA = an N-acetylarylamine + CoA. In terms of biological role, participates in the detoxification of a plethora of hydrazine and arylamine drugs. The sequence is that of Arylamine N-acetyltransferase 1 (NAT1) from Felis catus (Cat).